Consider the following 334-residue polypeptide: Glyceraldehyde-3-phosphate dehydrogenase (334 aa).

NAD(+) contacts are provided by residues 11-12, Asp-33, and Ser-119; that span reads RI. D-glyceraldehyde 3-phosphate contacts are provided by residues 149–151 and Thr-180; that span reads SCT. Catalysis depends on Cys-150, which acts as the Nucleophile. Asn-181 lines the NAD(+) pocket. D-glyceraldehyde 3-phosphate contacts are provided by residues Arg-197, 210–211, and Arg-233; that span reads TG. Asn-314 lines the NAD(+) pocket.

Belongs to the glyceraldehyde-3-phosphate dehydrogenase family. As to quaternary structure, homotetramer.

The protein resides in the cytoplasm. The enzyme catalyses D-glyceraldehyde 3-phosphate + phosphate + NAD(+) = (2R)-3-phospho-glyceroyl phosphate + NADH + H(+). Its pathway is carbohydrate degradation; glycolysis; pyruvate from D-glyceraldehyde 3-phosphate: step 1/5. Functionally, catalyzes the oxidative phosphorylation of glyceraldehyde 3-phosphate (G3P) to 1,3-bisphosphoglycerate (BPG) using the cofactor NAD. The first reaction step involves the formation of a hemiacetal intermediate between G3P and a cysteine residue, and this hemiacetal intermediate is then oxidized to a thioester, with concomitant reduction of NAD to NADH. The reduced NADH is then exchanged with the second NAD, and the thioester is attacked by a nucleophilic inorganic phosphate to produce BPG. The chain is Glyceraldehyde-3-phosphate dehydrogenase (gap) from Clostridium acetobutylicum (strain ATCC 824 / DSM 792 / JCM 1419 / IAM 19013 / LMG 5710 / NBRC 13948 / NRRL B-527 / VKM B-1787 / 2291 / W).